The primary structure comprises 453 residues: F-box/FBD/LRR-repeat protein At4g00160 (453 aa).

Residues 15-68 (KDRISELPDALLIKILSFLPTKIVVATSVFSKQWRPLWKLVPNLEFDSEDYDDK) form the F-box domain. 6 LRR repeats span residues 89–111 (LESF…LWVG), 165–190 (MKSL…LLSG), 215–239 (VPSL…VINA), 247–270 (IEDL…IFDG), 282–307 (LTSV…IFYQ), and 331–358 (SPKL…KWNE). The 52-residue stretch at 355–406 (KWNEPKYVPECLLSHLETFVWRRFDWGREEEKEIATYILKNARRLNKATFST) folds into the FBD domain.

This Arabidopsis thaliana (Mouse-ear cress) protein is F-box/FBD/LRR-repeat protein At4g00160.